Here is a 529-residue protein sequence, read N- to C-terminus: Tyrosinase (529 aa).

The signal sequence occupies residues 1–18 (MLLAALCCLLWSFRTSAG). Over 19 to 472 (HFPRACASSK…IKPFLEQASR (454 aa)) the chain is Lumenal. Asn-86, Asn-111, and Asn-161 each carry an N-linked (GlcNAc...) asparagine glycan. Positions 180, 202, and 211 each coordinate Cu cation. Asn-230 and Asn-336 each carry an N-linked (GlcNAc...) asparagine glycan. 2 residues coordinate Cu cation: His-362 and His-366. N-linked (GlcNAc...) asparagine glycosylation occurs at Asn-370. His-389 contacts Cu cation. Residues 473-495 (IWPWLIGAAVVGSVLTAVLGRLT) traverse the membrane as a helical segment. Residues 496-529 (SLLCRRKRKQLREERQPLLMEKEDYHSLLYQTHV) are Cytoplasmic-facing.

Belongs to the tyrosinase family. In terms of assembly, forms an OPN3-dependent complex with DCT in response to blue light in melanocytes. It depends on Cu(2+) as a cofactor. In terms of processing, glycosylated.

It localises to the melanosome membrane. It is found in the melanosome. The enzyme catalyses 2 L-dopa + O2 = 2 L-dopaquinone + 2 H2O. It catalyses the reaction L-tyrosine + O2 = L-dopaquinone + H2O. The catalysed reaction is 2 5,6-dihydroxyindole-2-carboxylate + O2 = 2 indole-5,6-quinone-2-carboxylate + 2 H2O. This is a copper-containing oxidase that functions in the formation of pigments such as melanins and other polyphenolic compounds. Catalyzes the initial and rate limiting step in the cascade of reactions leading to melanin production from tyrosine. In addition to hydroxylating tyrosine to DOPA (3,4-dihydroxyphenylalanine), also catalyzes the oxidation of DOPA to DOPA-quinone, and possibly the oxidation of DHI (5,6-dihydroxyindole) to indole-5,6 quinone. This is Tyrosinase (TYR) from Felis catus (Cat).